The primary structure comprises 99 residues: UPF0235 protein Sbal_3028 (99 aa).

This sequence belongs to the UPF0235 family.

The sequence is that of UPF0235 protein Sbal_3028 from Shewanella baltica (strain OS155 / ATCC BAA-1091).